We begin with the raw amino-acid sequence, 300 residues long: Non-secreted LysM effector LysM16 (300 aa).

One can recognise a LysM domain in the interval 176 to 222; sequence EWHTVFSGDTCQLIEAEYGITLEKFIALNTYVNSTCGNIWPDYAYCV.

The protein belongs to the secreted LysM effector family.

Its function is as follows. Non-secreted LysM effector that might be involved in manipulation of host defenses for successful infection. The polypeptide is Non-secreted LysM effector LysM16 (Penicillium expansum (Blue mold rot fungus)).